Here is a 244-residue protein sequence, read N- to C-terminus: CTD nuclear envelope phosphatase 1 (244 aa).

The helical transmembrane segment at 7–29 (LLGLRGFVAFAAKLWSFVLYLLR) threads the bilayer. Residues 57-224 (SQVKRKVLVL…LNLLPMLDAL (168 aa)) enclose the FCP1 homology domain.

It belongs to the dullard family. Interacts with bmpr1a, bmpr1b and bmpr2.

Its subcellular location is the membrane. It localises to the cytoplasm. The protein localises to the perinuclear region. It carries out the reaction O-phospho-L-seryl-[protein] + H2O = L-seryl-[protein] + phosphate. The catalysed reaction is O-phospho-L-threonyl-[protein] + H2O = L-threonyl-[protein] + phosphate. Serine/threonine protein phosphatase that may dephosphorylate and activate lipins. Lipins are phosphatidate phosphatases that catalyze the conversion of phosphatidic acid to diacylglycerol and control the metabolism of fatty acids at different levels. May indirectly modulate the lipid composition of nuclear and/or endoplasmic reticulum membranes and be required for proper nuclear membrane morphology and/or dynamics. May also indirectly regulate the production of lipid droplets and triacylglycerol. Induces neuronal differentiation by antagonizing BMP signaling. Acts both by dephosphorylating BMPR1A and by promoting BMPR2 proteasomal degradation. The polypeptide is CTD nuclear envelope phosphatase 1 (ctdnep1) (Xenopus tropicalis (Western clawed frog)).